Consider the following 107-residue polypeptide: Small leucine-rich protein 1 (107 aa).

Transmembrane regions (helical) follow at residues 19-39 (AALVLSVTPMVPVGSVWLAMS) and 53-73 (FLFFGVFLPVTLLLLLLIAYF). Residues 85–107 (SQNCDRQHNPKDGSSLYQRMKWT) form a disordered region.

Its subcellular location is the membrane. In Homo sapiens (Human), this protein is Small leucine-rich protein 1 (SMLR1).